Reading from the N-terminus, the 513-residue chain is 2-isopropylmalate synthase (513 aa).

Positions Leu-5–Val-268 constitute a Pyruvate carboxyltransferase domain. Mn(2+) is bound by residues Asp-14, His-202, His-204, and Asn-239. The segment at Arg-394 to Gly-513 is regulatory domain.

Belongs to the alpha-IPM synthase/homocitrate synthase family. LeuA type 1 subfamily. As to quaternary structure, homodimer. Mn(2+) serves as cofactor.

The protein localises to the cytoplasm. The enzyme catalyses 3-methyl-2-oxobutanoate + acetyl-CoA + H2O = (2S)-2-isopropylmalate + CoA + H(+). Its pathway is amino-acid biosynthesis; L-leucine biosynthesis; L-leucine from 3-methyl-2-oxobutanoate: step 1/4. Catalyzes the condensation of the acetyl group of acetyl-CoA with 3-methyl-2-oxobutanoate (2-ketoisovalerate) to form 3-carboxy-3-hydroxy-4-methylpentanoate (2-isopropylmalate). This Leptothrix cholodnii (strain ATCC 51168 / LMG 8142 / SP-6) (Leptothrix discophora (strain SP-6)) protein is 2-isopropylmalate synthase.